A 256-amino-acid polypeptide reads, in one-letter code: 1-(5-phosphoribosyl)-5-[(5-phosphoribosylamino)methylideneamino] imidazole-4-carboxamide isomerase (256 aa).

Asp-8 functions as the Proton acceptor in the catalytic mechanism. Asp-129 functions as the Proton donor in the catalytic mechanism.

The protein belongs to the HisA/HisF family.

The protein resides in the cytoplasm. It catalyses the reaction 1-(5-phospho-beta-D-ribosyl)-5-[(5-phospho-beta-D-ribosylamino)methylideneamino]imidazole-4-carboxamide = 5-[(5-phospho-1-deoxy-D-ribulos-1-ylimino)methylamino]-1-(5-phospho-beta-D-ribosyl)imidazole-4-carboxamide. It functions in the pathway amino-acid biosynthesis; L-histidine biosynthesis; L-histidine from 5-phospho-alpha-D-ribose 1-diphosphate: step 4/9. The protein is 1-(5-phosphoribosyl)-5-[(5-phosphoribosylamino)methylideneamino] imidazole-4-carboxamide isomerase of Picosynechococcus sp. (strain ATCC 27264 / PCC 7002 / PR-6) (Agmenellum quadruplicatum).